The sequence spans 219 residues: 2-phospho-L-lactate guanylyltransferase (219 aa).

The protein belongs to the CofC family. In terms of assembly, homodimer.

The catalysed reaction is (2S)-2-phospholactate + GTP + H(+) = (2S)-lactyl-2-diphospho-5'-guanosine + diphosphate. The protein operates within cofactor biosynthesis; coenzyme F420 biosynthesis. Guanylyltransferase that catalyzes the activation of (2S)-2-phospholactate (2-PL) as (2S)-lactyl-2-diphospho-5'-guanosine, via the condensation of 2-PL with GTP. It is involved in the biosynthesis of coenzyme F420, a hydride carrier cofactor. The sequence is that of 2-phospho-L-lactate guanylyltransferase from Methanocella arvoryzae (strain DSM 22066 / NBRC 105507 / MRE50).